The following is an 804-amino-acid chain: Probable exo-1,4-beta-xylosidase xlnD (804 aa).

The signal sequence occupies residues 1–26 (MAHSMSRPVAATAAALLALALPQALA). Residues Asn-29, Asn-124, Asn-148, Asn-242, and Asn-251 are each glycosylated (N-linked (GlcNAc...) asparagine). Asp-315 is a catalytic residue. N-linked (GlcNAc...) asparagine glycans are attached at residues Asn-357, Asn-390, Asn-413, Asn-444, Asn-455, Asn-573, Asn-576, Asn-665, Asn-696, and Asn-718.

The protein belongs to the glycosyl hydrolase 3 family.

It is found in the secreted. The enzyme catalyses Hydrolysis of (1-&gt;4)-beta-D-xylans, to remove successive D-xylose residues from the non-reducing termini.. The protein operates within glycan degradation; xylan degradation. Functionally, xylan 1,4-beta-xylosidase involved in the hydrolysis of xylan, a major structural heterogeneous polysaccharide found in plant biomass representing the second most abundant polysaccharide in the biosphere, after cellulose. The sequence is that of Probable exo-1,4-beta-xylosidase xlnD (xlnD) from Aspergillus niger (strain ATCC MYA-4892 / CBS 513.88 / FGSC A1513).